The chain runs to 430 residues: Probable carboxypeptidase AFLA_037450 (430 aa).

The N-terminal stretch at 1 to 16 (MKSIYSLVLCTALTAA) is a signal peptide. Asn-84 is a glycosylation site (N-linked (GlcNAc...) asparagine). A Zn(2+)-binding site is contributed by Asp-156. Glu-188 functions as the Proton acceptor in the catalytic mechanism. Glu-189 serves as a coordination point for Zn(2+). Asn-285 carries an N-linked (GlcNAc...) asparagine glycan.

The protein belongs to the peptidase M20A family. The cofactor is Zn(2+).

Its subcellular location is the secreted. This chain is Probable carboxypeptidase AFLA_037450, found in Aspergillus flavus (strain ATCC 200026 / FGSC A1120 / IAM 13836 / NRRL 3357 / JCM 12722 / SRRC 167).